The primary structure comprises 465 residues: Argininosuccinate lyase (465 aa).

This sequence belongs to the lyase 1 family. Argininosuccinate lyase subfamily.

The protein localises to the cytoplasm. The enzyme catalyses 2-(N(omega)-L-arginino)succinate = fumarate + L-arginine. The protein operates within amino-acid biosynthesis; L-arginine biosynthesis; L-arginine from L-ornithine and carbamoyl phosphate: step 3/3. This is Argininosuccinate lyase from Nitrobacter winogradskyi (strain ATCC 25391 / DSM 10237 / CIP 104748 / NCIMB 11846 / Nb-255).